The following is a 30-amino-acid chain: Babycurus-toxin 1 (30 aa).

The LCN-type CS-alpha/beta domain occupies 2–30 (KDGYPTNSKGCKISGCLPGENKFCLNECQ).

The protein belongs to the long (4 C-C) scorpion toxin superfamily. Sodium channel inhibitor family. As to expression, expressed by the venom gland.

The protein resides in the secreted. Its function is as follows. Binds to sodium channels (Nav) and inhibits both the activation and inactivation of the activated channels, thereby blocking neuronal transmission. This Babycurus centrurimorphus (East African scorpion) protein is Babycurus-toxin 1.